A 66-amino-acid polypeptide reads, in one-letter code: Beta-toxin Cbo2 (66 aa).

The LCN-type CS-alpha/beta domain maps to 1–66 (KEGYIVNYHD…VWPLPKKTCN (66 aa)). 4 disulfide bridges follow: Cys12–Cys65, Cys16–Cys41, Cys25–Cys46, and Cys29–Cys48. Asparagine amide is present on Asn66.

It belongs to the long (4 C-C) scorpion toxin superfamily. Sodium channel inhibitor family. Beta subfamily. As to expression, expressed by the venom gland.

The protein localises to the secreted. In terms of biological role, beta toxins bind voltage-independently at site-4 of sodium channels and shift the voltage of activation toward more negative potentials thereby affecting sodium channel activation and promoting spontaneous and repetitive firing. A mixture of Cbo2 and Cbo3 is weakly active on the human voltage-gated sodium channels Nav1.4/SCN4A and Nav1.6/SCN8A when tested at 200 nM. In vivo, is toxic to mice when intraperitoneally injected. The polypeptide is Beta-toxin Cbo2 (Centruroides bonito (Scorpion)).